Reading from the N-terminus, the 381-residue chain is Peptidoglycan glycosyltransferase MrdB (381 aa).

Helical transmembrane passes span 11–31 (FDLL…LLIF), 40–60 (KQGV…FIPF), 66–86 (WLFV…FMGY), 99–119 (FISI…LLLA), 132–152 (YDWG…ALIL), 156–176 (DLGT…IVGL), 180–200 (VWLP…HFLH), 263–283 (FGFL…LHLF), 297–317 (IVAL…IAMT), and 328–348 (LPLF…FGIL).

This sequence belongs to the SEDS family. MrdB/RodA subfamily.

Its subcellular location is the cell inner membrane. It carries out the reaction [GlcNAc-(1-&gt;4)-Mur2Ac(oyl-L-Ala-gamma-D-Glu-L-Lys-D-Ala-D-Ala)](n)-di-trans,octa-cis-undecaprenyl diphosphate + beta-D-GlcNAc-(1-&gt;4)-Mur2Ac(oyl-L-Ala-gamma-D-Glu-L-Lys-D-Ala-D-Ala)-di-trans,octa-cis-undecaprenyl diphosphate = [GlcNAc-(1-&gt;4)-Mur2Ac(oyl-L-Ala-gamma-D-Glu-L-Lys-D-Ala-D-Ala)](n+1)-di-trans,octa-cis-undecaprenyl diphosphate + di-trans,octa-cis-undecaprenyl diphosphate + H(+). It functions in the pathway cell wall biogenesis; peptidoglycan biosynthesis. Peptidoglycan polymerase that is essential for cell wall elongation. This Helicobacter pylori (strain ATCC 700392 / 26695) (Campylobacter pylori) protein is Peptidoglycan glycosyltransferase MrdB.